The sequence spans 156 residues: MDITLTIFAQALAFAGLIWIVATKIWPPLLKAIEERQQKIAEGLAAADRSQKDLAQAQEKVNEALKDARTKANEIIDQAHARANQIIEAAKLEAIAEANRQKDLAQAEIDASATRAREELRRQVSSLAVSGAEKLLKREIDATAHKALLDELAAEI.

The helical transmembrane segment at 3-23 (ITLTIFAQALAFAGLIWIVAT) threads the bilayer.

Belongs to the ATPase B chain family. As to quaternary structure, F-type ATPases have 2 components, F(1) - the catalytic core - and F(0) - the membrane proton channel. F(1) has five subunits: alpha(3), beta(3), gamma(1), delta(1), epsilon(1). F(0) has three main subunits: a(1), b(2) and c(10-14). The alpha and beta chains form an alternating ring which encloses part of the gamma chain. F(1) is attached to F(0) by a central stalk formed by the gamma and epsilon chains, while a peripheral stalk is formed by the delta and b chains.

It localises to the cell inner membrane. Its function is as follows. F(1)F(0) ATP synthase produces ATP from ADP in the presence of a proton or sodium gradient. F-type ATPases consist of two structural domains, F(1) containing the extramembraneous catalytic core and F(0) containing the membrane proton channel, linked together by a central stalk and a peripheral stalk. During catalysis, ATP synthesis in the catalytic domain of F(1) is coupled via a rotary mechanism of the central stalk subunits to proton translocation. Component of the F(0) channel, it forms part of the peripheral stalk, linking F(1) to F(0). The protein is ATP synthase subunit b of Xanthomonas campestris pv. campestris (strain 8004).